The chain runs to 144 residues: Transcriptional regulator SlyA (144 aa).

An HTH marR-type domain is found at 2-135 (ESPLGSDLAR…LITLIAKLEH (134 aa)). Residues 49–72 (QIQLAKAIGIEQPSLVRTLDQLEE) constitute a DNA-binding region (H-T-H motif).

Belongs to the SlyA family. As to quaternary structure, homodimer.

Its function is as follows. Transcription regulator that can specifically activate or repress expression of target genes. In Escherichia coli (strain 55989 / EAEC), this protein is Transcriptional regulator SlyA.